Reading from the N-terminus, the 200-residue chain is Adenylate kinase (200 aa).

An ATP-binding site is contributed by 11–16; that stretch reads GAGKGT. Positions 31-60 are NMP; the sequence is STGDIFRQNIKDRTELGQQVQALVDAGNYV. AMP is bound by residues Thr-32, Arg-37, 58-60, 86-89, and Gln-93; these read NYV and GYPR. Residues 127–137 form an LID region; the sequence is RRAAEQGRADD. Residue Arg-128 participates in ATP binding. AMP is bound by residues Arg-134 and Arg-145. An ATP-binding site is contributed by Gly-173.

The protein belongs to the adenylate kinase family. As to quaternary structure, monomer.

It is found in the cytoplasm. The catalysed reaction is AMP + ATP = 2 ADP. It functions in the pathway purine metabolism; AMP biosynthesis via salvage pathway; AMP from ADP: step 1/1. Its function is as follows. Catalyzes the reversible transfer of the terminal phosphate group between ATP and AMP. Plays an important role in cellular energy homeostasis and in adenine nucleotide metabolism. In Clavibacter michiganensis subsp. michiganensis (strain NCPPB 382), this protein is Adenylate kinase.